Here is a 140-residue protein sequence, read N- to C-terminus: ATP synthase epsilon chain (140 aa).

This sequence belongs to the ATPase epsilon chain family. In terms of assembly, F-type ATPases have 2 components, CF(1) - the catalytic core - and CF(0) - the membrane proton channel. CF(1) has five subunits: alpha(3), beta(3), gamma(1), delta(1), epsilon(1). CF(0) has three main subunits: a, b and c.

It is found in the cell inner membrane. Its function is as follows. Produces ATP from ADP in the presence of a proton gradient across the membrane. The polypeptide is ATP synthase epsilon chain (Legionella pneumophila (strain Lens)).